The following is a 647-amino-acid chain: tRNA 5-methylaminomethyl-2-thiouridine biosynthesis bifunctional protein MnmC (647 aa).

The tRNA (mnm(5)s(2)U34)-methyltransferase stretch occupies residues 1-235 (MSIPPFSQAS…KRDMLCGRFT (235 aa)). The tract at residues 250 to 647 (IGGGIAGTAS…RGLACHPLRR (398 aa)) is FAD-dependent cmnm(5)s(2)U34 oxidoreductase.

The protein in the N-terminal section; belongs to the methyltransferase superfamily. tRNA (mnm(5)s(2)U34)-methyltransferase family. It in the C-terminal section; belongs to the DAO family. FAD is required as a cofactor.

The protein localises to the cytoplasm. It carries out the reaction 5-aminomethyl-2-thiouridine(34) in tRNA + S-adenosyl-L-methionine = 5-methylaminomethyl-2-thiouridine(34) in tRNA + S-adenosyl-L-homocysteine + H(+). Functionally, catalyzes the last two steps in the biosynthesis of 5-methylaminomethyl-2-thiouridine (mnm(5)s(2)U) at the wobble position (U34) in tRNA. Catalyzes the FAD-dependent demodification of cmnm(5)s(2)U34 to nm(5)s(2)U34, followed by the transfer of a methyl group from S-adenosyl-L-methionine to nm(5)s(2)U34, to form mnm(5)s(2)U34. This Methylobacillus flagellatus (strain ATCC 51484 / DSM 6875 / VKM B-1610 / KT) protein is tRNA 5-methylaminomethyl-2-thiouridine biosynthesis bifunctional protein MnmC.